Consider the following 434-residue polypeptide: Adenylosuccinate synthetase (434 aa).

GTP is bound by residues 13–19 (GDEGKGK) and 41–43 (GHT). Residue Asp14 is the Proton acceptor of the active site. Asp14 and Gly41 together coordinate Mg(2+). Residues 14–17 (DEGK), 39–42 (NAGH), Thr133, Arg147, Gln228, Thr243, and Arg307 contribute to the IMP site. His42 (proton donor) is an active-site residue. 303 to 309 (STTGRKR) is a substrate binding site. GTP is bound by residues Arg309, 335 to 337 (KID), and 417 to 419 (STG).

Belongs to the adenylosuccinate synthetase family. Homodimer. The cofactor is Mg(2+).

The protein localises to the cytoplasm. It carries out the reaction IMP + L-aspartate + GTP = N(6)-(1,2-dicarboxyethyl)-AMP + GDP + phosphate + 2 H(+). The protein operates within purine metabolism; AMP biosynthesis via de novo pathway; AMP from IMP: step 1/2. Its function is as follows. Plays an important role in the de novo pathway of purine nucleotide biosynthesis. Catalyzes the first committed step in the biosynthesis of AMP from IMP. The chain is Adenylosuccinate synthetase from Wigglesworthia glossinidia brevipalpis.